The following is a 538-amino-acid chain: Acetylcholine receptor subunit alpha-type acr-7 (538 aa).

Positions 1-27 (MMVQSIQIVLPVALFFLIVFNGFTVEG) are cleaved as a signal peptide. Residues 28–250 (SKKEAQLYRD…LHLRRRTFYY (223 aa)) lie on the Extracellular side of the membrane. N41 and N101 each carry an N-linked (GlcNAc...) asparagine glycan. Cystine bridges form between C160–C174 and C229–C230. The next 3 membrane-spanning stretches (helical) occupy residues 251–271 (VFNV…AFCL), 280–300 (IGLQ…LSEM), and 313–333 (VFFS…ILVL). Residues 334–513 (NIRYRQITNH…FAAQAVDRFC (180 aa)) are Cytoplasmic-facing. The chain crosses the membrane as a helical span at residues 514-534 (LIIFTIVFIICCFIFVAIPPI).

The protein belongs to the ligand-gated ion channel (TC 1.A.9) family. Acetylcholine receptor (TC 1.A.9.1) subfamily. As to quaternary structure, forms a homooligomeric channel blocked by alpha-bungarotoxin. The structure is probably pentameric.

The protein localises to the postsynaptic cell membrane. It is found in the cell membrane. Functionally, after binding acetylcholine, the AChR responds by an extensive change in conformation that affects all subunits and leads to opening of an ion-conducting channel across the plasma membrane. The polypeptide is Acetylcholine receptor subunit alpha-type acr-7 (acr-7) (Caenorhabditis elegans).